Here is a 270-residue protein sequence, read N- to C-terminus: Elongation factor Ts (270 aa).

Residues 81–84 are involved in Mg(2+) ion dislocation from EF-Tu; it reads TDFV.

It belongs to the EF-Ts family.

It localises to the cytoplasm. Its function is as follows. Associates with the EF-Tu.GDP complex and induces the exchange of GDP to GTP. It remains bound to the aminoacyl-tRNA.EF-Tu.GTP complex up to the GTP hydrolysis stage on the ribosome. The chain is Elongation factor Ts from Wigglesworthia glossinidia brevipalpis.